Here is a 59-residue protein sequence, read N- to C-terminus: MAKKPGENTGKNGGIYQEVGPRGGKKDNFATVKDNERLPPTTKPGNGWVLDKRTPDSKK.

Residues 1–59 (MAKKPGENTGKNGGIYQEVGPRGGKKDNFATVKDNERLPPTTKPGNGWVLDKRTPDSKK) form a disordered region. Basic and acidic residues-rich tracts occupy residues 24-37 (GKKD…DNER) and 50-59 (LDKRTPDSKK).

This is an uncharacterized protein from Salmonella phage P22 (Bacteriophage P22).